Consider the following 249-residue polypeptide: Probable septum site-determining protein MinC (249 aa).

Residues 117 to 138 form a disordered region; it reads AVRPPQPPPPPHARAEPAAPVA.

The protein belongs to the MinC family. Interacts with MinD and FtsZ.

In terms of biological role, cell division inhibitor that blocks the formation of polar Z ring septums. Rapidly oscillates between the poles of the cell to destabilize FtsZ filaments that have formed before they mature into polar Z rings. Prevents FtsZ polymerization. The sequence is that of Probable septum site-determining protein MinC from Xanthomonas campestris pv. campestris (strain 8004).